A 227-amino-acid chain; its full sequence is Fibrillarin-like rRNA/tRNA 2'-O-methyltransferase (227 aa).

Residues 86–87 (TT), 105–106 (EF), 130–131 (DA), and 150–153 (DVAQ) contribute to the S-adenosyl-L-methionine site.

Belongs to the methyltransferase superfamily. Fibrillarin family. Interacts with nop5. Component of box C/D small ribonucleoprotein (sRNP) particles that contain rpl7ae, FlpA and nop5, plus a guide RNA.

Functionally, involved in pre-rRNA and tRNA processing. Utilizes the methyl donor S-adenosyl-L-methionine to catalyze the site-specific 2'-hydroxyl methylation of ribose moieties in rRNA and tRNA. Site specificity is provided by a guide RNA that base pairs with the substrate. Methylation occurs at a characteristic distance from the sequence involved in base pairing with the guide RNA. This chain is Fibrillarin-like rRNA/tRNA 2'-O-methyltransferase, found in Pyrococcus abyssi (strain GE5 / Orsay).